The chain runs to 28 residues: 50 kDa venom protease (28 aa).

This sequence belongs to the venom metalloproteinase (M12B) family. The cofactor is Zn(2+). As to expression, expressed by the venom gland.

Its subcellular location is the secreted. This is 50 kDa venom protease from Proatheris superciliaris (Lowland swamp viper).